A 467-amino-acid polypeptide reads, in one-letter code: 3-isopropylmalate dehydratase large subunit (467 aa).

[4Fe-4S] cluster-binding residues include Cys-347, Cys-408, and Cys-411.

This sequence belongs to the aconitase/IPM isomerase family. LeuC type 1 subfamily. In terms of assembly, heterodimer of LeuC and LeuD. It depends on [4Fe-4S] cluster as a cofactor.

It carries out the reaction (2R,3S)-3-isopropylmalate = (2S)-2-isopropylmalate. It functions in the pathway amino-acid biosynthesis; L-leucine biosynthesis; L-leucine from 3-methyl-2-oxobutanoate: step 2/4. In terms of biological role, catalyzes the isomerization between 2-isopropylmalate and 3-isopropylmalate, via the formation of 2-isopropylmaleate. The chain is 3-isopropylmalate dehydratase large subunit from Bordetella bronchiseptica (strain ATCC BAA-588 / NCTC 13252 / RB50) (Alcaligenes bronchisepticus).